Reading from the N-terminus, the 205-residue chain is Protein Nef (205 aa).

Glycine 2 carries the N-myristoyl glycine; by host lipid modification. Serine 6 bears the Phosphoserine; by host mark. The interval 62-65 is acidic; interacts with host PACS1 and PACS2; stabilizes the interaction of NEF/MHC-I with host AP1M1; necessary for MHC-I internalization; sequence DNEE. The interval 69–78 is SH3-binding; interaction with Src family tyrosine kinases; sequence PVRPQVPTRP. Residues 72 to 75 carry the PxxP; stabilizes the interaction of NEF/MHC-I with host AP1M1; necessary for MHC-I internalization motif; that stretch reads PQVP. The tract at residues 108-124 is mediates dimerization, Nef-PTE1 interaction; it reads EILDLWVYHTQGFFPDW. The interval 148-180 is binding to ATP6V1H; sequence LTEEQVEQANEGDNNCLLHPICQHGMEDEDKEV. Positions 164–165 match the Dileucine internalization motif; necessary for CD4 internalization motif; it reads LL. Positions 174–175 match the Diacidic; necessary for CD4 internalization motif; that stretch reads ED.

It belongs to the lentivirus primate group Nef protein family. In terms of assembly, monomer; cytosolic form. Homodimer; membrane bound form. Interacts with Nef associated p21-activated kinase (PAK2); this interaction activates PAK2. Associates with the Nef-MHC-I-AP1 complex; this complex is required for MHC-I internalization. Interacts (via C-terminus) with host PI3-kinase. Interacts with host PACS1; this interaction seems to be weak. Interacts with host PACS2. Interacts with host LCK and MAPK3; these interactions inhibit the kinase activity of the latter. Interacts with host ATP6V1H; this interaction may play a role in CD4 endocytosis. Associates with the CD4-Nef-AP2 complex; this complex is required for CD4 internalization. Interacts with host AP2 subunit alpha and AP2 subunit sigma2. Interacts with TCR-zeta chain; this interaction up-regulates the Fas ligand (FasL) surface expression. Interacts with host HCK, LYN, and SRC; these interactions activate the Src family kinases. Interacts with MAP3K5; this interaction inhibits the Fas and TNFR-mediated death signals. Interacts with beta-COP and PTE1. Interacts with human RACK1; this increases Nef phosphorylation by PKC. Interacts with TP53; this interaction decreases the half-life of TP53, protecting the infected cell against p53-mediated apoptosis. In terms of processing, the virion-associated Nef proteins are cleaved by the viral protease to release the soluble C-terminal core protein. Nef is probably cleaved concomitantly with viral structural proteins on maturation of virus particles. Myristoylated. Post-translationally, phosphorylated on serine residues, probably by host PKCdelta and theta.

It is found in the host cell membrane. Its subcellular location is the virion. The protein localises to the secreted. It localises to the host Golgi apparatus membrane. In terms of biological role, factor of infectivity and pathogenicity, required for optimal virus replication. Alters numerous pathways of T-lymphocyte function and down-regulates immunity surface molecules in order to evade host defense and increase viral infectivity. Alters the functionality of other immunity cells, like dendritic cells, monocytes/macrophages and NK cells. In infected CD4(+) T-lymphocytes, down-regulates the surface MHC-I, mature MHC-II, CD4, CD28, CCR5 and CXCR4 molecules. Mediates internalization and degradation of host CD4 through the interaction of with the cytoplasmic tail of CD4, the recruitment of AP-2 (clathrin adapter protein complex 2), internalization through clathrin coated pits, and subsequent transport to endosomes and lysosomes for degradation. Diverts host MHC-I molecules to the trans-Golgi network-associated endosomal compartments by an endocytic pathway to finally target them for degradation. MHC-I down-regulation may involve AP-1 (clathrin adapter protein complex 1) or possibly Src family kinase-ZAP70/Syk-PI3K cascade recruited by PACS2. In consequence infected cells are masked for immune recognition by cytotoxic T-lymphocytes. Decreasing the number of immune receptors also prevents reinfection by more HIV particles (superinfection). Down-regulates host SERINC3 and SERINC5 thereby excluding these proteins from the viral particles. Virion infectivity is drastically higher when SERINC3 or SERINC5 are excluded from the viral envelope, because these host antiviral proteins impair the membrane fusion event necessary for subsequent virion penetration. Its function is as follows. Bypasses host T-cell signaling by inducing a transcriptional program nearly identical to that of anti-CD3 cell activation. Interaction with TCR-zeta chain up-regulates the Fas ligand (FasL). Increasing surface FasL molecules and decreasing surface MHC-I molecules on infected CD4(+) cells send attacking cytotoxic CD8+ T-lymphocytes into apoptosis. Functionally, plays a role in optimizing the host cell environment for viral replication without causing cell death by apoptosis. Protects the infected cells from apoptosis in order to keep them alive until the next virus generation is ready to strike. Inhibits the Fas and TNFR-mediated death signals by blocking MAP3K5/ASK1. Decreases the half-life of TP53, protecting the infected cell against p53-mediated apoptosis. Inhibits the apoptotic signals regulated by the Bcl-2 family proteins through the formation of a Nef/PI3-kinase/PAK2 complex that leads to activation of PAK2 and induces phosphorylation of host BAD. In terms of biological role, extracellular Nef protein targets CD4(+) T-lymphocytes for apoptosis by interacting with CXCR4 surface receptors. This chain is Protein Nef, found in Simian immunodeficiency virus (isolate CPZ GAB1) (SIV-cpz).